A 307-amino-acid polypeptide reads, in one-letter code: F-box protein At2g23160 (307 aa).

One can recognise an F-box domain in the interval 2-49 (NSSSPISIDLIAEILSRVPSKSVARFRCVSKPWASMIRRPYFTELFLT).

The chain is F-box protein At2g23160 from Arabidopsis thaliana (Mouse-ear cress).